Consider the following 62-residue polypeptide: Keratin-associated protein 6-2 (62 aa).

This sequence belongs to the KRTAP type 6 family. Interacts with hair keratins.

Functionally, in the hair cortex, hair keratin intermediate filaments are embedded in an interfilamentous matrix, consisting of hair keratin-associated proteins (KRTAP), which are essential for the formation of a rigid and resistant hair shaft through their extensive disulfide bond cross-linking with abundant cysteine residues of hair keratins. The matrix proteins include the high-sulfur and high-glycine-tyrosine keratins. The chain is Keratin-associated protein 6-2 (KRTAP6-2) from Homo sapiens (Human).